The sequence spans 487 residues: MKYKDLREFLTLLEGQGELVRIKQEIDPYLEMAEISDRTLRKGGPAILFEKPKGYRMPVLCNLFGTPKRVALGMGQEDTHALRELGKLLAFLKEPEPPKGFKELIGQLPQWKQVLNMPSKVLGKADCQQVVLSGDEVDLYKLPIMHCHEGDVAPLVTWGLTVTQGPYKKRQNLGIYRQQLIGKNKLIMRWLSHRGGALDFHEWKEANPDKPFPVSVAIGADPATILAAVTPIPDTLSEYAFAGLLRGQKTEVTKSISNDLEIPASAEIVLEGYIDPNETALEGPYGDHTGYYNEQEYFPVFTVTHITMRRDAIYHSTYTGRPPDEPAVLGEALNEVFIPILQKQFPEIVDFYLPPEGCSYRLAVVTIKKQYAGHAKRVMMGVWSFLRQFMYTKFVIVCDDDVNARDWKDVIWAITTRCDPIRDTTLIDHTPIDYLDFASPIAGLGSKMGIDATNKWPGETSREWGTPIKKDPNVVKLVDEIWDQLGL.

Position 172 (asparagine 172) interacts with Mn(2+). Prenylated FMN-binding positions include 175–177 (IYR), 189–191 (RWL), and 194–195 (RG). A Mn(2+)-binding site is contributed by glutamate 238. Aspartate 287 acts as the Proton donor in catalysis.

The protein belongs to the UbiD family. In terms of assembly, homohexamer. The cofactor is prenylated FMN. Mn(2+) is required as a cofactor.

The protein localises to the cell membrane. The catalysed reaction is a 4-hydroxy-3-(all-trans-polyprenyl)benzoate + H(+) = a 2-(all-trans-polyprenyl)phenol + CO2. It functions in the pathway cofactor biosynthesis; ubiquinone biosynthesis. Functionally, catalyzes the decarboxylation of 3-octaprenyl-4-hydroxy benzoate to 2-octaprenylphenol, an intermediate step in ubiquinone biosynthesis. The sequence is that of 3-octaprenyl-4-hydroxybenzoate carboxy-lyase from Actinobacillus pleuropneumoniae serotype 3 (strain JL03).